A 137-amino-acid chain; its full sequence is MANVVQAKDNSQVFGVARIFASFNDTFVHVTDLSGRETIARVTGGMKVKADRDESSPYAAMLAAQDVAAKCKEVGITAVHIKIRATGGTRSKTPGPGGQAALRALARSGLRIGRIEDVTPVPSDSTRKKGGRRGRRL.

The interval 116–137 (EDVTPVPSDSTRKKGGRRGRRL) is disordered. Residues 128-137 (KKGGRRGRRL) are compositionally biased toward basic residues.

The protein belongs to the universal ribosomal protein uS11 family.

In Kluyveromyces lactis (strain ATCC 8585 / CBS 2359 / DSM 70799 / NBRC 1267 / NRRL Y-1140 / WM37) (Yeast), this protein is Small ribosomal subunit protein uS11 (RPS14).